Here is a 268-residue protein sequence, read N- to C-terminus: 4-hydroxy-tetrahydrodipicolinate reductase (268 aa).

NAD(+) contacts are provided by residues 8–13 (GAAGRM) and Glu-34. Arg-35 provides a ligand contact to NADP(+). Residues 96 to 98 (GST) and 120 to 123 (SPNM) contribute to the NAD(+) site. Residue His-153 is the Proton donor/acceptor of the active site. Position 154 (His-154) interacts with (S)-2,3,4,5-tetrahydrodipicolinate. The active-site Proton donor is the Lys-157. (S)-2,3,4,5-tetrahydrodipicolinate is bound at residue 163–164 (GT).

Belongs to the DapB family.

The protein resides in the cytoplasm. It carries out the reaction (S)-2,3,4,5-tetrahydrodipicolinate + NAD(+) + H2O = (2S,4S)-4-hydroxy-2,3,4,5-tetrahydrodipicolinate + NADH + H(+). The catalysed reaction is (S)-2,3,4,5-tetrahydrodipicolinate + NADP(+) + H2O = (2S,4S)-4-hydroxy-2,3,4,5-tetrahydrodipicolinate + NADPH + H(+). Its pathway is amino-acid biosynthesis; L-lysine biosynthesis via DAP pathway; (S)-tetrahydrodipicolinate from L-aspartate: step 4/4. In terms of biological role, catalyzes the conversion of 4-hydroxy-tetrahydrodipicolinate (HTPA) to tetrahydrodipicolinate. This is 4-hydroxy-tetrahydrodipicolinate reductase from Anaeromyxobacter sp. (strain Fw109-5).